The following is a 498-amino-acid chain: Angiopoietin-1 (498 aa).

An N-terminal signal peptide occupies residues 1–15; that stretch reads MTVFLSFAFLAAILT. Residues 81–119 adopt a coiled-coil conformation; sequence QKLQHLEHVMENYTQWLQKLENYIVENMKSEMAQIQQNA. 5 N-linked (GlcNAc...) asparagine glycosylation sites follow: Asn92, Asn122, Asn154, Asn243, and Asn295. Residues 153–261 are a coiled coil; sequence LNQTSRLEIQ…LELMDTVHNL (109 aa). Residues 277-497 enclose the Fibrinogen C-terminal domain; that stretch reads REEEKPFRDC…STTMMIRPLD (221 aa). 2 disulfide bridges follow: Cys286-Cys315 and Cys439-Cys452.

In terms of assembly, homooligomer. Interacts with TEK/TIE2. Interacts with SVEP1/polydom. Interacts with THBD; this interaction significantly inhibits the generation of activated PC and TAFIa/CPB2 by the thrombin/thrombomodulin complex. Post-translationally, glycosylated.

The protein localises to the secreted. Binds and activates TEK/TIE2 receptor by inducing its dimerization and tyrosine phosphorylation. Plays an important role in the regulation of angiogenesis, endothelial cell survival, proliferation, migration, adhesion and cell spreading, reorganization of the actin cytoskeleton, but also maintenance of vascular quiescence. Required for normal angiogenesis and heart development during embryogenesis. After birth, activates or inhibits angiogenesis, depending on the context. Inhibits angiogenesis and promotes vascular stability in quiescent vessels, where endothelial cells have tight contacts. In quiescent vessels, ANGPT1 oligomers recruit TEK to cell-cell contacts, forming complexes with TEK molecules from adjoining cells, and this leads to preferential activation of phosphatidylinositol 3-kinase and the AKT1 signaling cascades. In migrating endothelial cells that lack cell-cell adhesions, ANGT1 recruits TEK to contacts with the extracellular matrix, leading to the formation of focal adhesion complexes, activation of PTK2/FAK and of the downstream kinases MAPK1/ERK2 and MAPK3/ERK1, and ultimately to the stimulation of sprouting angiogenesis. Mediates blood vessel maturation/stability. Implicated in endothelial developmental processes later and distinct from that of VEGF. Appears to play a crucial role in mediating reciprocal interactions between the endothelium and surrounding matrix and mesenchyme. This Homo sapiens (Human) protein is Angiopoietin-1 (ANGPT1).